Reading from the N-terminus, the 89-residue chain is Small ribosomal subunit protein uS14A (89 aa).

The protein belongs to the universal ribosomal protein uS14 family. Part of the 30S ribosomal subunit. Contacts proteins S3 and S10.

Binds 16S rRNA, required for the assembly of 30S particles and may also be responsible for determining the conformation of the 16S rRNA at the A site. This is Small ribosomal subunit protein uS14A from Oceanobacillus iheyensis (strain DSM 14371 / CIP 107618 / JCM 11309 / KCTC 3954 / HTE831).